A 278-amino-acid polypeptide reads, in one-letter code: Large ribosomal subunit protein uL2 (278 aa).

Residues 201–278 (HGNINDGKAG…IMRSRHQRKK (78 aa)) are disordered. Residues 210 to 221 (GRSRWRGKRPHV) show a composition bias toward basic residues.

It belongs to the universal ribosomal protein uL2 family. As to quaternary structure, part of the 50S ribosomal subunit. Forms a bridge to the 30S subunit in the 70S ribosome.

One of the primary rRNA binding proteins. Required for association of the 30S and 50S subunits to form the 70S ribosome, for tRNA binding and peptide bond formation. It has been suggested to have peptidyltransferase activity; this is somewhat controversial. Makes several contacts with the 16S rRNA in the 70S ribosome. This is Large ribosomal subunit protein uL2 from Sinorhizobium fredii (strain NBRC 101917 / NGR234).